The chain runs to 81 residues: MKTLLLTLVVVTVVCLDFGHTMICYNQQSSQPPTTTTCSEGQCYKKTWSDHRGTIIERGCACPNVKPGVKISCCSSDKCNG.

A signal peptide spans 1-21 (MKTLLLTLVVVTVVCLDFGHT). Intrachain disulfides connect Cys-24–Cys-43, Cys-38–Cys-60, Cys-62–Cys-73, and Cys-74–Cys-79.

It belongs to the three-finger toxin family. Short-chain subfamily. Type I alpha-neurotoxin sub-subfamily. As to expression, expressed by the venom gland.

The protein localises to the secreted. Functionally, binds to muscle nicotinic acetylcholine receptor (nAChR) and inhibit acetylcholine from binding to the receptor, thereby impairing neuromuscular transmission. The polypeptide is Three-finger toxin MALT0051C (Micrurus altirostris (Uruguayan coral snake)).